We begin with the raw amino-acid sequence, 525 residues long: GMP synthase [glutamine-hydrolyzing] (525 aa).

The Glutamine amidotransferase type-1 domain maps to 8 to 206 (PLLILDFGSQ…VVDICKASTD (199 aa)). Cysteine 85 (nucleophile) is an active-site residue. Catalysis depends on residues histidine 180 and glutamate 182. Residues 207–400 (WTPEHIIDEA…LGLPHDMVYR (194 aa)) form the GMPS ATP-PPase domain. Residue 234-240 (SGGVDSS) participates in ATP binding.

In terms of assembly, homodimer.

It catalyses the reaction XMP + L-glutamine + ATP + H2O = GMP + L-glutamate + AMP + diphosphate + 2 H(+). It participates in purine metabolism; GMP biosynthesis; GMP from XMP (L-Gln route): step 1/1. In terms of biological role, catalyzes the synthesis of GMP from XMP. This is GMP synthase [glutamine-hydrolyzing] from Legionella pneumophila subsp. pneumophila (strain Philadelphia 1 / ATCC 33152 / DSM 7513).